We begin with the raw amino-acid sequence, 93 residues long: NADH-ubiquinone oxidoreductase chain 4L (93 aa).

Helical transmembrane passes span 3 to 23 (LTIL…GPLG), 27 to 47 (IIKL…LIIL), and 55 to 75 (ILGL…SAIG).

This sequence belongs to the complex I subunit 4L family.

The protein localises to the mitochondrion membrane. It carries out the reaction a ubiquinone + NADH + 5 H(+)(in) = a ubiquinol + NAD(+) + 4 H(+)(out). In terms of biological role, core subunit of the mitochondrial membrane respiratory chain NADH dehydrogenase (Complex I) that is believed to belong to the minimal assembly required for catalysis. Complex I functions in the transfer of electrons from NADH to the respiratory chain. The immediate electron acceptor for the enzyme is believed to be ubiquinone. The sequence is that of NADH-ubiquinone oxidoreductase chain 4L (ND4L) from Wickerhamomyces canadensis (Yeast).